The chain runs to 553 residues: Glutamate--tRNA ligase (553 aa).

The 'HIGH' region signature appears at 103–113 (PNPSGPLHIGH).

This sequence belongs to the class-I aminoacyl-tRNA synthetase family. Glutamate--tRNA ligase type 2 subfamily.

It localises to the cytoplasm. The catalysed reaction is tRNA(Glu) + L-glutamate + ATP = L-glutamyl-tRNA(Glu) + AMP + diphosphate. In terms of biological role, catalyzes the attachment of glutamate to tRNA(Glu) in a two-step reaction: glutamate is first activated by ATP to form Glu-AMP and then transferred to the acceptor end of tRNA(Glu). The polypeptide is Glutamate--tRNA ligase (Methanothermobacter thermautotrophicus (strain ATCC 29096 / DSM 1053 / JCM 10044 / NBRC 100330 / Delta H) (Methanobacterium thermoautotrophicum)).